Here is a 182-residue protein sequence, read N- to C-terminus: MPFDKQNLIWIDLEMTGLDPEKERIIEIATIVTDKNLNILAEGPVLAVHQSDELLNKMNDWCQKTHSENGLIERVKASKLTERAAELQTLDFLKKWVPKGASPICGNSIAQDKRFLVKYMPDLADYFHYRHLDVSTLKELAARWKPEILEGFKKENTHLALDDIRESIKELAYYREHFMKLD.

In terms of domain architecture, Exonuclease spans 8 to 171 (LIWIDLEMTG…DDIRESIKEL (164 aa)). Tyr129 is an active-site residue.

The protein belongs to the oligoribonuclease family.

The protein localises to the cytoplasm. In terms of biological role, 3'-to-5' exoribonuclease specific for small oligoribonucleotides. The polypeptide is Oligoribonuclease (Haemophilus influenzae (strain 86-028NP)).